We begin with the raw amino-acid sequence, 274 residues long: Pyrroline-5-carboxylate reductase 3 (274 aa).

Ala-2 carries the post-translational modification N-acetylalanine.

The protein belongs to the pyrroline-5-carboxylate reductase family. In terms of assembly, homodecamer; composed of 5 homodimers.

The protein localises to the cytoplasm. The catalysed reaction is L-proline + NADP(+) = (S)-1-pyrroline-5-carboxylate + NADPH + 2 H(+). The enzyme catalyses L-proline + NAD(+) = (S)-1-pyrroline-5-carboxylate + NADH + 2 H(+). It functions in the pathway amino-acid biosynthesis; L-proline biosynthesis; L-proline from L-glutamate 5-semialdehyde: step 1/1. Its function is as follows. Oxidoreductase that catalyzes the last step in proline biosynthesis, which corresponds to the reduction of pyrroline-5-carboxylate (P5C) to L-proline using NAD(P)H. Proline is synthesized from either glutamate or ornithine; both are converted to P5C, and then to proline via pyrroline-5-carboxylate reductases (PYCRs). PYCR3 is exclusively linked to the biosynthesis of proline from ornithine. This Mus musculus (Mouse) protein is Pyrroline-5-carboxylate reductase 3.